A 694-amino-acid polypeptide reads, in one-letter code: Long-chain-fatty-acid--CoA ligase 4 (694 aa).

The disordered stretch occupies residues 1–21; it reads MTEQYSVAVGEAANEHETAPR. 269–280 is a binding site for ATP; sequence YTSGSTGTPKGV. Residues 527 to 576 carry the FACS motif; the sequence is DGWFRTGDIAEWTPKGQVKIIDRKKNLVKTLNGEYIALEKLESIYRSNPY.

The protein belongs to the ATP-dependent AMP-binding enzyme family. Interacts with FAT1. Requires Mg(2+) as cofactor.

Its subcellular location is the lipid droplet. It carries out the reaction a long-chain fatty acid + ATP + CoA = a long-chain fatty acyl-CoA + AMP + diphosphate. The catalysed reaction is (9Z)-hexadecenoate + ATP + CoA = (9Z)-hexadecenoyl-CoA + AMP + diphosphate. The enzyme catalyses (9Z)-octadecenoate + ATP + CoA = (9Z)-octadecenoyl-CoA + AMP + diphosphate. It catalyses the reaction hexadecanoate + ATP + CoA = hexadecanoyl-CoA + AMP + diphosphate. In terms of biological role, activates long-chain fatty acids (LCFA) by esterification of the fatty acids into metabolically active CoA-thioesters for subsequent degradation or incorporation into phospholipids. Also facilitates the transport of LCFAs into the cell, either by active transport or by decreasing the intracellular LCFA concentration. Contributes, with FAA1, to the activation of imported myristate. Also involved in long-chain base (LCB) uptake. In contrast ot LCFA uptake, LCB uptake does not require ATP, suggesting that the enzyme is directly involved in LCB uptake. Involved in the sphingolipid-to-glycerolipid metabolic pathway, converting the sphingolipid metabolite hexadecenoic acid to hexadecenoyl-CoA, which is then further converted to glycerolipids. This Saccharomyces cerevisiae (strain ATCC 204508 / S288c) (Baker's yeast) protein is Long-chain-fatty-acid--CoA ligase 4 (FAA4).